A 325-amino-acid polypeptide reads, in one-letter code: Protease HtpX homolog (325 aa).

The chain crosses the membrane as a helical span at residues I20–M40. H130 provides a ligand contact to Zn(2+). The active site involves E131. Position 134 (H134) interacts with Zn(2+). The next 2 helical transmembrane spans lie at I145–G165 and V173–V193. E202 contributes to the Zn(2+) binding site. Residues A288–S325 are disordered. Low complexity predominate over residues R306–S325.

This sequence belongs to the peptidase M48B family. Zn(2+) is required as a cofactor.

Its subcellular location is the cell inner membrane. The protein is Protease HtpX homolog of Brucella abortus (strain S19).